The following is a 138-amino-acid chain: Large ribosomal subunit protein bL17 (138 aa).

It belongs to the bacterial ribosomal protein bL17 family. In terms of assembly, part of the 50S ribosomal subunit. Contacts protein L32.

The sequence is that of Large ribosomal subunit protein bL17 from Methylorubrum extorquens (strain CM4 / NCIMB 13688) (Methylobacterium extorquens).